The primary structure comprises 59 residues: Movement protein TGBp3 (59 aa).

Topologically, residues 1-3 are lumenal; the sequence is MHL. A helical transmembrane segment spans residues 4–21; that stretch reads AIVGALTLVLTLFVLHYT. The Cytoplasmic segment spans residues 22–59; sequence TKDDRCYILINGHSAFTNCPASPDLAKVISQLKPHNHG.

The protein belongs to the Tymovirales TGBp3 protein family.

It is found in the host endoplasmic reticulum membrane. Functionally, plays a role in viral cell-to-cell propagation, by facilitating genome transport to neighboring plant cells through plasmosdesmata. May induce the formation of granular vesicles derived from the Endoplasmic reticulum, which align on actin filaments. This is Movement protein TGBp3 from Chenopodium album (Fat hen).